A 324-amino-acid polypeptide reads, in one-letter code: MTKTFRNPQLTKNGELKHLLSIEGLSRDMITHILDTASQFVSLSDSDRDVKKVPLLRGKSVFNLFFENSTRTRTTFEIAAKRLSADVLNLNINASSTSKGESLLDTINNLSAMSADMFVVRHASSGAPYLIAEHVAPHVHVINAGDGRHAHPTQGLLDMYTIRHFKKDFTNLTVAIVGDILHSRVARSDIHALTTLGVPEVRAIGPRTLLPSGLEQMGVRVFHDMEEGLKGVDVVIMLRLQNERMSGALLPSAQEYFKAYGLTPERLALANRDAIVMHPGPMNRGVEIDSAVADGPQSVILNQVTFGIAVRMAVMGIVAGNSDE.

Carbamoyl phosphate contacts are provided by R71 and T72. Residue K99 participates in L-aspartate binding. Carbamoyl phosphate-binding residues include R121, H151, and Q154. L-aspartate is bound by residues R184 and R239. Residues G280 and P281 each coordinate carbamoyl phosphate.

It belongs to the aspartate/ornithine carbamoyltransferase superfamily. ATCase family. Heterododecamer (2C3:3R2) of six catalytic PyrB chains organized as two trimers (C3), and six regulatory PyrI chains organized as three dimers (R2).

The enzyme catalyses carbamoyl phosphate + L-aspartate = N-carbamoyl-L-aspartate + phosphate + H(+). It functions in the pathway pyrimidine metabolism; UMP biosynthesis via de novo pathway; (S)-dihydroorotate from bicarbonate: step 2/3. Catalyzes the condensation of carbamoyl phosphate and aspartate to form carbamoyl aspartate and inorganic phosphate, the committed step in the de novo pyrimidine nucleotide biosynthesis pathway. The chain is Aspartate carbamoyltransferase catalytic subunit from Cupriavidus necator (strain ATCC 17699 / DSM 428 / KCTC 22496 / NCIMB 10442 / H16 / Stanier 337) (Ralstonia eutropha).